The chain runs to 536 residues: Prolyl 3-hydroxylase sudestada1 (536 aa).

Positions 1–35 are disordered; it reads METSSSSPVKPRRKDKDEDGRAEQEDSADQVGEPH. A compositionally biased stretch (basic and acidic residues) spans 14–24; it reads KDKDEDGRAEQ. The region spanning 165–275 is the Fe2OG dioxygenase domain; the sequence is KLDYVSASCS…RLTINGWFHG (111 aa). Residues histidine 185 and aspartate 187 each contribute to the Fe cation site. Tyrosine 199 is a binding site for 2-oxoglutarate. Histidine 254 is a Fe cation binding site. Residue arginine 266 participates in 2-oxoglutarate binding. Residues 467-486 are disordered; that stretch reads PTAKAPTDGRRSDYDDEEED.

The protein belongs to the TPA1 family. Monomer. It depends on Fe(2+) as a cofactor. Requires L-ascorbate as cofactor. In terms of tissue distribution, in third-instar larval tissues,highly expressed in the fat body, with significant expression in other organs including the brain, salivary glands, imaginal disks and gut.

Its subcellular location is the nucleus. It localises to the cytoplasm. The catalysed reaction is [ribosomal protein uS12]-L-proline + 2-oxoglutarate + O2 = [ribosomal protein uS12]-(3S)-3-hydroxy-L-proline + succinate + CO2. Its function is as follows. Prolyl 3-hydroxylase that catalyzes 3-hydroxylation of 'Pro-62' of small ribosomal subunit uS12 (RpS23), thereby regulating protein translation termination efficiency. The sequence is that of Prolyl 3-hydroxylase sudestada1 (sud1) from Drosophila melanogaster (Fruit fly).